We begin with the raw amino-acid sequence, 367 residues long: Apolipoprotein A-V (367 aa).

The first 20 residues, 1–20 (MVAVLTWALALLSAFATVQT), serve as a signal peptide directing secretion. The residue at position 56 (S56) is a Phosphoserine. Residues 71–90 (LGPLSGQGREPPGLPHDPEG) are disordered.

It belongs to the apolipoprotein A1/A4/E family. In terms of assembly, interacts with GPIHBP1. Interacts with SORL1; this interaction leads to APOA5 internalization and sorting either to lysosomes and degradation, or to the trans-Golgi network. Phosphorylated by FAM20C in the extracellular medium.

The protein resides in the secreted. It localises to the early endosome. It is found in the late endosome. Its subcellular location is the golgi apparatus. The protein localises to the trans-Golgi network. In terms of biological role, minor apolipoprotein mainly associated with HDL and to a lesser extent with VLDL. May also be associated with chylomicrons. Important determinant of plasma triglyceride (TG) levels by both being a potent stimulator of apo-CII lipoprotein lipase (LPL) TG hydrolysis and an inhibitor of the hepatic VLDL-TG production rate (without affecting the VLDL-apoB production rate). Activates poorly lecithin:cholesterol acyltransferase (LCAT) and does not enhance efflux of cholesterol from macrophages. Binds heparin. The chain is Apolipoprotein A-V (APOA5) from Neomonachus schauinslandi (Hawaiian monk seal).